The chain runs to 1676 residues: Anucleate primary sterigmata protein A (1676 aa).

A compositionally biased stretch (polar residues) spans 1-11 (MEDSQRGNASM). Residues 1–35 (MEDSQRGNASMMSMMDDPFVVSPEGARDPPSTNQY) are disordered. Residues 51 to 127 (AQAKRALEAH…EIGQETARAF (77 aa)) are a coiled coil. 7 disordered regions span residues 160-180 (QATNSPSKVSVPSRKSRNQSN), 353-394 (RLRQ…TPRH), 439-712 (DEVE…SRRP), 1027-1050 (GTSTDTVEFSVSSISSEETEPVEP), 1176-1201 (PLGAISGNAAPRRARSGSSNQADQGA), 1220-1270 (VRPL…QASS), and 1297-1354 (PASA…RRSS). Over residues 163–172 (NSPSKVSVPS) the composition is skewed to low complexity. 2 coiled-coil regions span residues 193 to 359 (TSLL…QQEA) and 408 to 453 (HAHR…AANG). Composition is skewed to basic and acidic residues over residues 355-370 (RQQEAESTREVVRPHD), 439-448 (DEVEQRRRDS), 461-470 (TKAETRKPAR), 479-489 (KKAEVEIHDSD), and 503-522 (ASNDSRDRRGDQPIDDRSDA). Positions 593-602 (SYYSTASTSA) are enriched in low complexity. A compositionally biased stretch (polar residues) spans 609–620 (DPGTPSISQFST). Over residues 623–636 (YRLRKKRSVLRKIR) the composition is skewed to basic residues. Polar residues predominate over residues 647-664 (SRPSSARESPSTSFTRDT). The span at 678 to 687 (AEVDGDEDDF) shows a compositional bias: acidic residues. Positions 1032 to 1042 (TVEFSVSSISS) are enriched in low complexity. Residues 1191–1201 (SGSSNQADQGA) are compositionally biased toward polar residues. Positions 1314–1341 (RASSQQRPRTPNESALQVGSAKTTTSRA) are enriched in polar residues. Residues 1393-1504 (QTMIGEFLWK…WFNALSYLLV (112 aa)) form the PH domain. A compositionally biased stretch (acidic residues) spans 1511–1524 (EEAENGVTLDDIDE). 2 disordered regions span residues 1511–1589 (EEAE…QASS) and 1654–1676 (HDVSSLSRTSRYSPRANRIHSHH). 2 stretches are compositionally biased toward polar residues: residues 1534-1548 (RQTARMSVSSSQSRG) and 1580-1589 (YSDQARQASS).

The protein localises to the membrane. Its function is as follows. Required for nuclear positioning and completion of asexual development. The protein is Anucleate primary sterigmata protein A (apsA) of Emericella nidulans (strain FGSC A4 / ATCC 38163 / CBS 112.46 / NRRL 194 / M139) (Aspergillus nidulans).